A 1402-amino-acid chain; its full sequence is Transcription elongation factor spt-6 (1402 aa).

Positions Met-1–Thr-199 are disordered. 4 stretches are compositionally biased toward acidic residues: residues Asp-10–Ala-28, Asp-40–Glu-52, Ile-62–Asp-75, and Glu-90–Leu-102. Basic and acidic residues predominate over residues His-123–Leu-135. Acidic residues predominate over residues Asp-161–Glu-176. The span at Glu-177–Thr-199 shows a compositional bias: basic and acidic residues. An S1 motif domain is found at Gly-1094–Arg-1161. The SH2 domain occupies Pro-1209–Asp-1306.

This sequence belongs to the SPT6 family.

It is found in the nucleus. The protein localises to the chromosome. Functionally, histone H3-H4 chaperone that plays a role in maintenance of chromatin structure during RNA polymerase II transcription elongation thereby repressing transcription initiation from cryptic promoters. Mediates the reassembly of nucleosomes onto the promoters of at least a selected set of genes during repression; the nucleosome reassembly is essential for transcriptional repression. Essential for viability. The sequence is that of Transcription elongation factor spt-6 (spt-6) from Neurospora crassa (strain ATCC 24698 / 74-OR23-1A / CBS 708.71 / DSM 1257 / FGSC 987).